A 225-amino-acid chain; its full sequence is Ribonuclease 3 (225 aa).

The 123-residue stretch at 5–127 (IEKLTRQLGY…IIGAVYLDSD (123 aa)) folds into the RNase III domain. Residue E40 participates in Mg(2+) binding. D44 is a catalytic residue. Positions 113 and 116 each coordinate Mg(2+). Residue E116 is part of the active site. Residues 154-224 (DPKTRLQEFL…AELALEQLTN (71 aa)) enclose the DRBM domain.

It belongs to the ribonuclease III family. In terms of assembly, homodimer. Mg(2+) is required as a cofactor.

It localises to the cytoplasm. The enzyme catalyses Endonucleolytic cleavage to 5'-phosphomonoester.. In terms of biological role, digests double-stranded RNA. Involved in the processing of primary rRNA transcript to yield the immediate precursors to the large and small rRNAs (23S and 16S). Processes some mRNAs, and tRNAs when they are encoded in the rRNA operon. Processes pre-crRNA and tracrRNA of type II CRISPR loci if present in the organism. This is Ribonuclease 3 from Vibrio vulnificus (strain CMCP6).